The primary structure comprises 318 residues: Mitochondrial coenzyme A transporter SLC25A42 (318 aa).

3 Solcar repeats span residues 31–117 (RQVL…YKRI), 129–214 (LPPW…LKSL), and 224–312 (PYPF…MQIL). A run of 6 helical transmembrane segments spans residues 33-53 (VLSS…AVAP), 89-109 (LWRG…IQFS), 135-155 (LLAG…LDLV), 186-206 (LYFG…LSFF), 230-250 (MVFG…LDVV), and 293-313 (LKGP…QILL).

Belongs to the mitochondrial carrier (TC 2.A.29) family. Widely expressed. Highly expressed in adipose, followed by hypothalamus and brain coronal sections containing corpus callosum, fornix, thalamus, hypothalamus, optic chiasm, pons, midbrain, and cerebellum.

The protein resides in the mitochondrion inner membrane. The enzyme catalyses ADP(out) + CoA(in) = ADP(in) + CoA(out). The catalysed reaction is 3'-dephospho-CoA(in) + ADP(out) = 3'-dephospho-CoA(out) + ADP(in). It carries out the reaction adenosine 3',5'-bisphosphate(in) + ADP(out) = adenosine 3',5'-bisphosphate(out) + ADP(in). It catalyses the reaction AMP(in) + ADP(out) = AMP(out) + ADP(in). The enzyme catalyses dADP(in) + ADP(out) = dADP(out) + ADP(in). The catalysed reaction is ADP(in) + ATP(out) = ADP(out) + ATP(in). Functionally, mitochondrial carrier mediating the transport of coenzyme A (CoA) in mitochondria in exchange for intramitochondrial (deoxy)adenine nucleotides and adenosine 3',5'-diphosphate. The protein is Mitochondrial coenzyme A transporter SLC25A42 (Slc25a42) of Rattus norvegicus (Rat).